The chain runs to 376 residues: Succinyl-diaminopimelate desuccinylase (376 aa).

His-67 is a binding site for Zn(2+). Asp-69 is an active-site residue. Asp-100 provides a ligand contact to Zn(2+). The Proton acceptor role is filled by Glu-134. Zn(2+) is bound by residues Glu-135, Glu-163, and His-349.

It belongs to the peptidase M20A family. DapE subfamily. Homodimer. Zn(2+) serves as cofactor. Co(2+) is required as a cofactor.

The catalysed reaction is N-succinyl-(2S,6S)-2,6-diaminopimelate + H2O = (2S,6S)-2,6-diaminopimelate + succinate. It functions in the pathway amino-acid biosynthesis; L-lysine biosynthesis via DAP pathway; LL-2,6-diaminopimelate from (S)-tetrahydrodipicolinate (succinylase route): step 3/3. Catalyzes the hydrolysis of N-succinyl-L,L-diaminopimelic acid (SDAP), forming succinate and LL-2,6-diaminopimelate (DAP), an intermediate involved in the bacterial biosynthesis of lysine and meso-diaminopimelic acid, an essential component of bacterial cell walls. The sequence is that of Succinyl-diaminopimelate desuccinylase from Idiomarina loihiensis (strain ATCC BAA-735 / DSM 15497 / L2-TR).